A 91-amino-acid chain; its full sequence is MPRSLKKGPFIDLHLLKKVEAAVEKNDRKPVKTWSRRSMILPQMVGLTIAVHNGRQHVPVLVNEDMVGHKLGEFAGTRTYRGHVADKKGKR.

This sequence belongs to the universal ribosomal protein uS19 family.

Protein S19 forms a complex with S13 that binds strongly to the 16S ribosomal RNA. The polypeptide is Small ribosomal subunit protein uS19 (Ectopseudomonas mendocina (strain ymp) (Pseudomonas mendocina)).